A 258-amino-acid chain; its full sequence is Protein UL24 homolog (258 aa).

Belongs to the herpesviridae UL24 family.

The protein resides in the virion. Its subcellular location is the host cytoplasm. It localises to the host nucleus. The protein localises to the host nucleolus. It is found in the host Golgi apparatus. Functionally, may participate in nuclear egress of viral particles. Plays a role in the dispersal of several host nucleolar proteins including NCL/nucleolin and NPM1. Since deletion of host NCL/nucleolin negatively impact on nuclear egress, UL24 supposedly acts on this process through its effect on host nucleoli. The sequence is that of Protein UL24 homolog from Homo sapiens (Human).